Here is a 273-residue protein sequence, read N- to C-terminus: Ethanolamine ammonia-lyase small subunit (273 aa).

Adenosylcob(III)alamin is bound by residues V164, E185, and C214.

The protein belongs to the EutC family. The basic unit is a heterodimer which dimerizes to form tetramers. The heterotetramers trimerize; 6 large subunits form a core ring with 6 small subunits projecting outwards. Adenosylcob(III)alamin is required as a cofactor.

The protein resides in the bacterial microcompartment. It catalyses the reaction ethanolamine = acetaldehyde + NH4(+). Its pathway is amine and polyamine degradation; ethanolamine degradation. In terms of biological role, catalyzes the deamination of various vicinal amino-alcohols to oxo compounds. Allows this organism to utilize ethanolamine as the sole source of nitrogen and carbon in the presence of external vitamin B12. The polypeptide is Ethanolamine ammonia-lyase small subunit (Pseudomonas paraeruginosa (strain DSM 24068 / PA7) (Pseudomonas aeruginosa (strain PA7))).